Here is a 222-residue protein sequence, read N- to C-terminus: uncharacterized protein (222 aa).

A lipid anchor (N-myristoyl glycine; by host) is attached at G2.

It belongs to the mimivirus R683/R861 family.

This is an uncharacterized protein from Acanthamoeba polyphaga mimivirus (APMV).